Here is a 308-residue protein sequence, read N- to C-terminus: uncharacterized protein (308 aa).

A compositionally biased stretch (polar residues) spans 43–55 (SQYGTWADQHQNG). A disordered region spans residues 43-289 (SQYGTWADQH…KEERSEECSP (247 aa)). S62 is subject to Phosphoserine. Positions 80–90 (HLSSYTESTSV) are enriched in polar residues. Over residues 91–109 (EQRDSSRDRRSSSVDRSSS) the composition is skewed to basic and acidic residues. Over residues 136–152 (IHQTSVLDSSALKTRVQ) the composition is skewed to polar residues. The span at 153–168 (LSKRSRRRAPISHSLR) shows a compositional bias: basic residues. A Phosphoserine modification is found at S166. 2 stretches are compositionally biased toward basic and acidic residues: residues 175–186 (SESRSPLEEESH) and 193–216 (DSTE…ERTP). 4 positions are modified to phosphoserine: S205, S259, S262, and S288.

This is an uncharacterized protein from Mus musculus (Mouse).